The sequence spans 446 residues: NADH oxidase (446 aa).

FAD-binding positions include 7-11 (GCTHA), Glu-32, Cys-42, Val-79, 110-113 (TTGS), Lys-132, and Tyr-157. The active-site Proton acceptor is the His-10. The Redox-active role is filled by Cys-42. Cysteine sulfinic acid (-SO2H) is present on Cys-42. NAD(+)-binding positions include 150–165 (VVVV…LVEA), Asp-177, Tyr-186, and Gly-243. Residues 271–281 (TSNPDIFAAGD), Leu-298, Ala-299, and Thr-300 contribute to the FAD site. Gly-328 is an NAD(+) binding site. Phe-424 is a binding site for FAD.

The protein belongs to the class-III pyridine nucleotide-disulfide oxidoreductase family. As to quaternary structure, homodimer. Requires FAD as cofactor. The N-terminus is blocked.

The enzyme catalyses 2 NADH + O2 + 2 H(+) = 2 NAD(+) + 2 H2O. In terms of biological role, catalyzes the four-electron reduction of molecular oxygen to water. The sequence is that of NADH oxidase (nox) from Enterococcus faecalis (strain ATCC 700802 / V583).